We begin with the raw amino-acid sequence, 441 residues long: Arginine biosynthesis bifunctional protein ArgJ, mitochondrial (441 aa).

Residues Thr-177, Lys-204, Thr-215, Glu-301, Asn-436, and Ser-441 each contribute to the substrate site. The active-site Nucleophile is the Thr-215.

Belongs to the ArgJ family. In terms of assembly, heterodimer of an alpha and a beta chain. The alpha and beta chains are autoproteolytically processed from a single precursor protein within the mitochondrion.

It localises to the mitochondrion matrix. The catalysed reaction is N(2)-acetyl-L-ornithine + L-glutamate = N-acetyl-L-glutamate + L-ornithine. It carries out the reaction L-glutamate + acetyl-CoA = N-acetyl-L-glutamate + CoA + H(+). The protein operates within amino-acid biosynthesis; L-arginine biosynthesis; L-ornithine and N-acetyl-L-glutamate from L-glutamate and N(2)-acetyl-L-ornithine (cyclic): step 1/1. It participates in amino-acid biosynthesis; L-arginine biosynthesis; N(2)-acetyl-L-ornithine from L-glutamate: step 1/4. Its function is as follows. Catalyzes two activities which are involved in the cyclic version of arginine biosynthesis: the synthesis of acetylglutamate from glutamate and acetyl-CoA, and of ornithine by transacetylation between acetylornithine and glutamate. In Kluyveromyces lactis (strain ATCC 8585 / CBS 2359 / DSM 70799 / NBRC 1267 / NRRL Y-1140 / WM37) (Yeast), this protein is Arginine biosynthesis bifunctional protein ArgJ, mitochondrial.